We begin with the raw amino-acid sequence, 375 residues long: All-trans-retinol dehydrogenase [NAD(+)] ADH1B (375 aa).

The residue at position 2 (Ser2) is an N-acetylserine. A Phosphoserine modification is found at Ser23. Tyr35 is modified (phosphotyrosine). Zn(2+) is bound by residues Cys47, His68, Cys98, Cys101, Cys104, Cys112, and Cys175. NAD(+)-binding positions include 200-205 (GLGGVG), Asp224, Lys229, 293-295 (VGV), and Arg370.

The protein belongs to the zinc-containing alcohol dehydrogenase family. As to quaternary structure, dimer of identical or non-identical chains of three types; alpha, beta and gamma. Zn(2+) serves as cofactor.

It localises to the cytoplasm. It catalyses the reaction all-trans-retinol + NAD(+) = all-trans-retinal + NADH + H(+). It carries out the reaction all-trans-4-hydroxyretinol + NAD(+) = all-trans-4-hydroxyretinal + NADH + H(+). The enzyme catalyses all-trans-4-oxoretinol + NAD(+) = all-trans-4-oxoretinal + NADH + H(+). Its function is as follows. Catalyzes the NAD-dependent oxidation of all-trans-retinol and its derivatives such as all-trans-4-hydroxyretinol and may participate in retinoid metabolism. In vitro can also catalyze the NADH-dependent reduction of all-trans-retinal and its derivatives such as all-trans-4-oxoretinal. Catalyzes in the oxidative direction with higher efficiency. Has the same affinity for all-trans-4-hydroxyretinol and all-trans-4-oxoretinal. The chain is All-trans-retinol dehydrogenase [NAD(+)] ADH1B from Homo sapiens (Human).